Consider the following 618-residue polypeptide: Manganese lipoxygenase (618 aa).

The signal sequence occupies residues 1 to 16 (MRSRILAIVFAARHVA). Low complexity predominate over residues 36 to 45 (SSTTVLPSPT). The disordered stretch occupies residues 36 to 58 (SSTTVLPSPTQYTLPNNDPNQGA). Residues 46-58 (QYTLPNNDPNQGA) show a composition bias toward polar residues. The Lipoxygenase domain maps to 47 to 618 (YTLPNNDPNQ…PAVNPFFLSV (572 aa)). N-linked (GlcNAc...) asparagine glycans are attached at residues asparagine 60, asparagine 91, asparagine 106, asparagine 116, and asparagine 157. Mn(2+) is bound by residues histidine 290, histidine 294, histidine 478, and asparagine 482. N-linked (GlcNAc...) asparagine glycosylation is present at asparagine 513. Valine 618 is a binding site for Mn(2+).

The protein belongs to the lipoxygenase family. Manganese lipoxygenase subfamily. The cofactor is Mn(2+). N- and O-glycosylated.

It localises to the secreted. The catalysed reaction is (9Z,12Z)-octadecadienoate + O2 = (11S)-hydroperoxy-(9Z,12Z)-octadecadienoate. The enzyme catalyses (9Z,12Z)-octadecadienoate + O2 = (13R)-hydroperoxy-(9Z,11E)-octadecadienoate. It carries out the reaction (9Z,12Z,15Z)-octadecatrienoate + O2 = (11S)-hydroperoxy-(9Z,12Z,15Z)-octadecatrienoate. It catalyses the reaction (9Z,12Z,15Z)-octadecatrienoate + O2 = (13R)-hydroperoxy-(9Z,11E,15Z)-octadecatrienoate. Lipoxygenase that metabolizes linoleic and alpha-linolenic acids to 11S- and 13R-hydroperoxy fatty acids. At the end of lipoxygenation, the intermediate product 11S-HPODE from linoleic acid is then transformed into 13R-HPODE as the final product. It also acts on alpha-linolenic acid producing 11S-HPOTrE and 13R-HPOTrE with subsequent transformation of 11S-HPOTrE to 13R-HPOTrE as final product. This chain is Manganese lipoxygenase, found in Gaeumannomyces avenae (Oat take-all root rot fungus).